A 250-amino-acid polypeptide reads, in one-letter code: Flap endonuclease Xni (250 aa).

Residue Asp104 participates in Mg(2+) binding. The 5'-3' exonuclease domain occupies 160-249; it reads VQPQQLTDFW…LQGNLQQLRL (90 aa). The K(+) site is built by Leu171, Ala172, Pro180, Val182, and Ile185. Residues 184–189 form an interaction with DNA region; the sequence is GIGPKS.

It belongs to the Xni family. Mg(2+) is required as a cofactor. The cofactor is K(+).

Has flap endonuclease activity. During DNA replication, flap endonucleases cleave the 5'-overhanging flap structure that is generated by displacement synthesis when DNA polymerase encounters the 5'-end of a downstream Okazaki fragment. This chain is Flap endonuclease Xni, found in Sodalis glossinidius (strain morsitans).